The primary structure comprises 863 residues: Leucine--tRNA ligase (863 aa).

The 'HIGH' region motif lies at 42–52 (PYPSGRLHMGH). Positions 622–626 (KMSKS) match the 'KMSKS' region motif. ATP is bound at residue lysine 625.

It belongs to the class-I aminoacyl-tRNA synthetase family.

The protein resides in the cytoplasm. The catalysed reaction is tRNA(Leu) + L-leucine + ATP = L-leucyl-tRNA(Leu) + AMP + diphosphate. The polypeptide is Leucine--tRNA ligase (Shewanella sediminis (strain HAW-EB3)).